A 452-amino-acid polypeptide reads, in one-letter code: Phosphoglucosamine mutase (452 aa).

Ser112 acts as the Phosphoserine intermediate in catalysis. 4 residues coordinate Mg(2+): Ser112, Asp251, Asp253, and Asp255. Ser112 is subject to Phosphoserine.

It belongs to the phosphohexose mutase family. Requires Mg(2+) as cofactor. In terms of processing, activated by phosphorylation.

It carries out the reaction alpha-D-glucosamine 1-phosphate = D-glucosamine 6-phosphate. Functionally, catalyzes the conversion of glucosamine-6-phosphate to glucosamine-1-phosphate. The chain is Phosphoglucosamine mutase from Bordetella bronchiseptica (strain ATCC BAA-588 / NCTC 13252 / RB50) (Alcaligenes bronchisepticus).